The sequence spans 338 residues: Replication factor C small subunit (338 aa).

53-60 contributes to the ATP binding site; the sequence is GPPGVGKT.

Belongs to the activator 1 small subunits family. RfcS subfamily. As to quaternary structure, heteromultimer composed of small subunits (RfcS) and large subunits (RfcL).

Functionally, part of the RFC clamp loader complex which loads the PCNA sliding clamp onto DNA. This chain is Replication factor C small subunit, found in Methanosarcina acetivorans (strain ATCC 35395 / DSM 2834 / JCM 12185 / C2A).